A 124-amino-acid polypeptide reads, in one-letter code: UPF0231 protein Shewana3_0655 (124 aa).

It belongs to the UPF0231 family.

The sequence is that of UPF0231 protein Shewana3_0655 from Shewanella sp. (strain ANA-3).